A 503-amino-acid polypeptide reads, in one-letter code: GTPase Obg (503 aa).

Residues 2 to 159 (PQFVDRVVLH…KDVILELKSM (158 aa)) form the Obg domain. Positions 160-340 (ADVGLVGFPS…LKYALMDIVK (181 aa)) constitute an OBG-type G domain. GTP-binding positions include 166–173 (GFPSAGKS), 191–195 (FTTLV), 212–215 (DVPG), 292–295 (NKMD), and 321–323 (STV). Positions 173 and 193 each coordinate Mg(2+). Residues 371–444 (EFEVEADPSA…IGEITFEWDP (74 aa)) form the OCT domain. Residues 457 to 476 (RGTDVRLEQNTRATPEERKR) show a composition bias toward basic and acidic residues. The segment at 457 to 503 (RGTDVRLEQNTRATPEERKRASQARRGLIDENDFGDGEVAERERWQG) is disordered.

This sequence belongs to the TRAFAC class OBG-HflX-like GTPase superfamily. OBG GTPase family. In terms of assembly, monomer. Requires Mg(2+) as cofactor.

The protein localises to the cytoplasm. Its function is as follows. An essential GTPase which binds GTP, GDP and possibly (p)ppGpp with moderate affinity, with high nucleotide exchange rates and a fairly low GTP hydrolysis rate. Plays a role in control of the cell cycle, stress response, ribosome biogenesis and in those bacteria that undergo differentiation, in morphogenesis control. In Corynebacterium jeikeium (strain K411), this protein is GTPase Obg.